The following is a 473-amino-acid chain: Aspartyl/glutamyl-tRNA(Asn/Gln) amidotransferase subunit B (473 aa).

Belongs to the GatB/GatE family. GatB subfamily. In terms of assembly, heterotrimer of A, B and C subunits.

The enzyme catalyses L-glutamyl-tRNA(Gln) + L-glutamine + ATP + H2O = L-glutaminyl-tRNA(Gln) + L-glutamate + ADP + phosphate + H(+). The catalysed reaction is L-aspartyl-tRNA(Asn) + L-glutamine + ATP + H2O = L-asparaginyl-tRNA(Asn) + L-glutamate + ADP + phosphate + 2 H(+). In terms of biological role, allows the formation of correctly charged Asn-tRNA(Asn) or Gln-tRNA(Gln) through the transamidation of misacylated Asp-tRNA(Asn) or Glu-tRNA(Gln) in organisms which lack either or both of asparaginyl-tRNA or glutaminyl-tRNA synthetases. The reaction takes place in the presence of glutamine and ATP through an activated phospho-Asp-tRNA(Asn) or phospho-Glu-tRNA(Gln). This Sulfurisphaera tokodaii (strain DSM 16993 / JCM 10545 / NBRC 100140 / 7) (Sulfolobus tokodaii) protein is Aspartyl/glutamyl-tRNA(Asn/Gln) amidotransferase subunit B.